Consider the following 311-residue polypeptide: tRNA-cytidine(32) 2-sulfurtransferase (311 aa).

A PP-loop motif motif is present at residues 47–52; sequence SGGKDS. [4Fe-4S] cluster-binding residues include Cys-122, Cys-125, and Cys-213.

Belongs to the TtcA family. As to quaternary structure, homodimer. Mg(2+) is required as a cofactor. It depends on [4Fe-4S] cluster as a cofactor.

Its subcellular location is the cytoplasm. The enzyme catalyses cytidine(32) in tRNA + S-sulfanyl-L-cysteinyl-[cysteine desulfurase] + AH2 + ATP = 2-thiocytidine(32) in tRNA + L-cysteinyl-[cysteine desulfurase] + A + AMP + diphosphate + H(+). The protein operates within tRNA modification. Functionally, catalyzes the ATP-dependent 2-thiolation of cytidine in position 32 of tRNA, to form 2-thiocytidine (s(2)C32). The sulfur atoms are provided by the cysteine/cysteine desulfurase (IscS) system. This is tRNA-cytidine(32) 2-sulfurtransferase from Shigella flexneri serotype 5b (strain 8401).